The sequence spans 443 residues: Xaa-Pro dipeptidase (443 aa).

5 residues coordinate Mn(2+): Asp-246, Asp-257, His-339, Glu-384, and Glu-423.

The protein belongs to the peptidase M24B family. Bacterial-type prolidase subfamily. The cofactor is Mn(2+).

It carries out the reaction Xaa-L-Pro dipeptide + H2O = an L-alpha-amino acid + L-proline. Splits dipeptides with a prolyl residue in the C-terminal position. The sequence is that of Xaa-Pro dipeptidase from Cronobacter sakazakii (strain ATCC BAA-894) (Enterobacter sakazakii).